The primary structure comprises 132 residues: Small ribosomal subunit protein uS8 (132 aa).

It belongs to the universal ribosomal protein uS8 family. In terms of assembly, part of the 30S ribosomal subunit. Contacts proteins S5 and S12.

In terms of biological role, one of the primary rRNA binding proteins, it binds directly to 16S rRNA central domain where it helps coordinate assembly of the platform of the 30S subunit. The chain is Small ribosomal subunit protein uS8 from Lactococcus lactis subsp. lactis (strain IL1403) (Streptococcus lactis).